The chain runs to 161 residues: Large ribosomal subunit protein uL30m (161 aa).

The transit peptide at M1–H34 directs the protein to the mitochondrion.

The protein belongs to the universal ribosomal protein uL30 family. As to quaternary structure, component of the mitochondrial ribosome large subunit (39S) which comprises a 16S rRNA and about 50 distinct proteins.

The protein resides in the mitochondrion. The polypeptide is Large ribosomal subunit protein uL30m (MRPL30) (Bos taurus (Bovine)).